Reading from the N-terminus, the 443-residue chain is Trigger factor (443 aa).

A PPIase FKBP-type domain is found at 161–246 (GDKVVIDFQG…IKKIMEGKLP (86 aa)).

This sequence belongs to the FKBP-type PPIase family. Tig subfamily.

The protein localises to the cytoplasm. The catalysed reaction is [protein]-peptidylproline (omega=180) = [protein]-peptidylproline (omega=0). In terms of biological role, involved in protein export. Acts as a chaperone by maintaining the newly synthesized protein in an open conformation. Functions as a peptidyl-prolyl cis-trans isomerase. This Legionella pneumophila subsp. pneumophila (strain Philadelphia 1 / ATCC 33152 / DSM 7513) protein is Trigger factor.